The primary structure comprises 449 residues: Trigger factor (449 aa).

A PPIase FKBP-type domain is found at 173 to 258 (GDRVTLDFVG…LKKVEWAHLP (86 aa)).

The protein belongs to the FKBP-type PPIase family. Tig subfamily.

It is found in the cytoplasm. It catalyses the reaction [protein]-peptidylproline (omega=180) = [protein]-peptidylproline (omega=0). Functionally, involved in protein export. Acts as a chaperone by maintaining the newly synthesized protein in an open conformation. Functions as a peptidyl-prolyl cis-trans isomerase. This is Trigger factor from Cupriavidus metallidurans (strain ATCC 43123 / DSM 2839 / NBRC 102507 / CH34) (Ralstonia metallidurans).